The sequence spans 358 residues: G-protein coupled receptor 62 (358 aa).

Topologically, residues 1–17 (MANGSGLSVTELAGSVG) are extracellular. N3 is a glycosylation site (N-linked (GlcNAc...) asparagine). Residues 18 to 38 (FILAVLVEVGAVLGNGTLLVV) form a helical membrane-spanning segment. Over 39–53 (VLRTPDLQDAFYLAH) the chain is Cytoplasmic. A helical membrane pass occupies residues 54-74 (LCVVDLLAAASIMPLGLLAAP). The Extracellular segment spans residues 75 to 89 (PGLGTVPLDPSSCRA). The chain crosses the membrane as a helical span at residues 90–110 (ARFLSAALLPACTLGVAALGL). The Cytoplasmic segment spans residues 111–128 (ARYRLIVHPLRPGARPAP). Residues 129–149 (ALVLTAVWSAAALLGALSLLG) form a helical membrane-spanning segment. Topologically, residues 150 to 176 (PPPAPPPAPARCSVLAGGLGPFRPLWA) are extracellular. Residues 177-197 (MLAFALPALLLLAAYGSIFLV) form a helical membrane-spanning segment. The Cytoplasmic segment spans residues 198-234 (ARRAALRPPRGTRPRSDSLDSRLSFLPPLRPRLLGGK). The chain crosses the membrane as a helical span at residues 235–255 (AALAPALAVGQFAACWLPYGC). The Extracellular portion of the chain corresponds to 256-268 (ACLAPAARAAAAE). A helical membrane pass occupies residues 269 to 289 (ATVTWVAYSAFAAHPFLYGLL). At 290–358 (QRPVRLALGR…RQTPSVSEAT (69 aa)) the chain is on the cytoplasmic side. The tract at residues 334 to 358 (VLGPSEAPEQARELARQTPSVSEAT) is disordered.

Belongs to the G-protein coupled receptor 1 family. Homodimer. Forms heterodimer with MTNR1B. Interacts with ARRB1 and ARRB2 in a spontaneous and agonist-independent manner; leading to the internalization of GPR62 in the endosomal compartment. In terms of tissue distribution, expressed in the brain and testes. Expressed widely, in the brain, including the cerebral cortex, cerebellum, hippocampus,thalamus and pituitary gland. In the testes, expressed specifically in the germ cells.

It localises to the cell membrane. The protein localises to the endosome membrane. Functionally, orphan G-protein coupled receptor. Constitutively activates the G(q/11)/inositol phosphate and the G(s)-alpha/cAMP signaling pathways. Has spontaneous activity for beta-arrestin recruitment. Shows a reciprocal regulatory interaction with the melatonin receptor MTNR1B most likely through receptor heteromerization. The chain is G-protein coupled receptor 62 (Gpr62) from Mus musculus (Mouse).